Here is a 422-residue protein sequence, read N- to C-terminus: Keratin, type I cytoskeletal 23 (422 aa).

The segment covering 1-13 (MNSGHSFSQTPSA) has biased composition (polar residues). Positions 1-71 (MNSGHSFSQT…GRSSPLLGGN (71 aa)) are head. A disordered region spans residues 1-73 (MNSGHSFSQT…SSPLLGGNGK (73 aa)). A coil 1A region spans residues 72 to 107 (GKATMQNLNDRLASYLEKVRALEEANMKLESRILKW). The IF rod domain occupies 72-382 (GKATMQNLND…RLLEGESEGT (311 aa)). A linker 1 region spans residues 108–125 (HQQRDPGSKKDYSQYEEN). Residues 126 to 217 (ITHLQEQIVD…KHHEQEMEKH (92 aa)) are coil 1B. Residues 218–240 (HVPSDFNVNVKVDTGPREDLIKV) form a linker 12 region. The interval 241–378 (LEDMRQEYEL…TTYRRLLEGE (138 aa)) is coil 2. Residues 379 to 422 (SEGTREESKSSMKVSATPKIKAITQETINGRLVLCQVNEIQKHA) are rod-like helical tail.

The protein belongs to the intermediate filament family. Heterotetramer of two type I and two type II keratins.

This is Keratin, type I cytoskeletal 23 (KRT23) from Homo sapiens (Human).